Reading from the N-terminus, the 602-residue chain is RecBCD enzyme subunit RecD (602 aa).

An ATP-binding site is contributed by 171–178 (GGPGTGKT).

The protein belongs to the RecD family. Heterotrimer of RecB, RecC and RecD. All subunits contribute to DNA-binding.

It carries out the reaction Couples ATP hydrolysis with the unwinding of duplex DNA at the replication fork by translocating in the 5'-3' direction. This creates two antiparallel DNA single strands (ssDNA). The leading ssDNA polymer is the template for DNA polymerase III holoenzyme which synthesizes a continuous strand.. It catalyses the reaction ATP + H2O = ADP + phosphate + H(+). A helicase/nuclease that prepares dsDNA breaks (DSB) for recombinational DNA repair. Binds to DSBs and unwinds DNA via a highly rapid and processive ATP-dependent bidirectional helicase activity. Unwinds dsDNA until it encounters a Chi (crossover hotspot instigator) sequence from the 3' direction. Cuts ssDNA a few nucleotides 3' to the Chi site. The properties and activities of the enzyme are changed at Chi. The Chi-altered holoenzyme produces a long 3'-ssDNA overhang and facilitates RecA-binding to the ssDNA for homologous DNA recombination and repair. Holoenzyme degrades any linearized DNA that is unable to undergo homologous recombination. In the holoenzyme this subunit has ssDNA-dependent ATPase and 5'-3' helicase activity. When added to pre-assembled RecBC greatly stimulates nuclease activity and augments holoenzyme processivity. Negatively regulates the RecA-loading ability of RecBCD. The chain is RecBCD enzyme subunit RecD from Buchnera aphidicola subsp. Acyrthosiphon pisum (strain APS) (Acyrthosiphon pisum symbiotic bacterium).